Reading from the N-terminus, the 172-residue chain is Transcriptional repressor NrdR (172 aa).

Residues 3–34 (CPFCGEADTKVIDSRLVAEGDQVRRRRECLSC) fold into a zinc finger. The ATP-cone domain occupies 49–139 (PRVVKQDGTR…VYRSFQDINE (91 aa)).

This sequence belongs to the NrdR family. Requires Zn(2+) as cofactor.

Functionally, negatively regulates transcription of bacterial ribonucleotide reductase nrd genes and operons by binding to NrdR-boxes. In Marinobacter nauticus (strain ATCC 700491 / DSM 11845 / VT8) (Marinobacter aquaeolei), this protein is Transcriptional repressor NrdR.